The primary structure comprises 353 residues: DNA polymerase IV (353 aa).

A UmuC domain is found at 14 to 198 (IIHIDMDAFF…MDISKFHGVG (185 aa)). Residues D18 and D116 each coordinate Mg(2+). E117 is an active-site residue.

This sequence belongs to the DNA polymerase type-Y family. Monomer. Mg(2+) serves as cofactor.

The protein resides in the cytoplasm. The enzyme catalyses DNA(n) + a 2'-deoxyribonucleoside 5'-triphosphate = DNA(n+1) + diphosphate. Its function is as follows. Poorly processive, error-prone DNA polymerase involved in untargeted mutagenesis. Copies undamaged DNA at stalled replication forks, which arise in vivo from mismatched or misaligned primer ends. These misaligned primers can be extended by PolIV. Exhibits no 3'-5' exonuclease (proofreading) activity. May be involved in translesional synthesis, in conjunction with the beta clamp from PolIII. The sequence is that of DNA polymerase IV from Streptococcus pneumoniae serotype 2 (strain D39 / NCTC 7466).